The primary structure comprises 274 residues: Thymidylate synthase (274 aa).

Residue arginine 21 participates in dUMP binding. Residue histidine 51 participates in (6R)-5,10-methylene-5,6,7,8-tetrahydrofolate binding. Residue 123 to 124 (RR) participates in dUMP binding. Cysteine 156 functions as the Nucleophile in the catalytic mechanism. DUMP is bound by residues 176-179 (RSAD), asparagine 187, and 217-219 (HIY). Aspartate 179 lines the (6R)-5,10-methylene-5,6,7,8-tetrahydrofolate pocket. Serine 273 provides a ligand contact to (6R)-5,10-methylene-5,6,7,8-tetrahydrofolate.

It belongs to the thymidylate synthase family. Bacterial-type ThyA subfamily. As to quaternary structure, homodimer.

The protein resides in the cytoplasm. The enzyme catalyses dUMP + (6R)-5,10-methylene-5,6,7,8-tetrahydrofolate = 7,8-dihydrofolate + dTMP. The protein operates within pyrimidine metabolism; dTTP biosynthesis. In terms of biological role, catalyzes the reductive methylation of 2'-deoxyuridine-5'-monophosphate (dUMP) to 2'-deoxythymidine-5'-monophosphate (dTMP) while utilizing 5,10-methylenetetrahydrofolate (mTHF) as the methyl donor and reductant in the reaction, yielding dihydrofolate (DHF) as a by-product. This enzymatic reaction provides an intracellular de novo source of dTMP, an essential precursor for DNA biosynthesis. The protein is Thymidylate synthase of Francisella philomiragia subsp. philomiragia (strain ATCC 25017 / CCUG 19701 / FSC 153 / O#319-036).